A 637-amino-acid polypeptide reads, in one-letter code: Early transcription factor 70 kDa subunit (637 aa).

The region spanning 32-185 is the Helicase ATP-binding domain; the sequence is RTIIDENRSV…GHIIDLMSEE (154 aa). 45 to 52 is an ATP binding site; the sequence is HIMGSGKT. Positions 135–138 match the DEXH box motif; it reads DEAH. Residues 327–507 form the Helicase C-terminal domain; that stretch reads KFKYFINRIQ…VLPFDIKKLL (181 aa).

The protein belongs to the helicase family. VETF subfamily. Heterodimer of a 70 kDa and a 82 kDa subunit. Part of the early transcription complex composed of ETF, RAP94/OPG109, and the DNA-directed RNA polymerase.

The protein resides in the virion. Functionally, acts with RNA polymerase to initiate transcription from early gene promoters. Is recruited by the RPO-associated protein of 94 kDa RAP94/OPG109 to form the early transcription complex, which also contains the core RNA polymerase. ETF heterodimer binds to early gene promoters. This Homo sapiens (Human) protein is Early transcription factor 70 kDa subunit (OPG118).